The sequence spans 882 residues: Alanine--tRNA ligase (882 aa).

Zn(2+) is bound by residues His-568, His-572, Cys-670, and His-674.

It belongs to the class-II aminoacyl-tRNA synthetase family. Zn(2+) is required as a cofactor.

It is found in the cytoplasm. The enzyme catalyses tRNA(Ala) + L-alanine + ATP = L-alanyl-tRNA(Ala) + AMP + diphosphate. Functionally, catalyzes the attachment of alanine to tRNA(Ala) in a two-step reaction: alanine is first activated by ATP to form Ala-AMP and then transferred to the acceptor end of tRNA(Ala). Also edits incorrectly charged Ser-tRNA(Ala) and Gly-tRNA(Ala) via its editing domain. The sequence is that of Alanine--tRNA ligase from Lactobacillus johnsonii (strain CNCM I-12250 / La1 / NCC 533).